Here is a 414-residue protein sequence, read N- to C-terminus: Histidine--tRNA ligase (414 aa).

This sequence belongs to the class-II aminoacyl-tRNA synthetase family. In terms of assembly, homodimer.

It is found in the cytoplasm. The enzyme catalyses tRNA(His) + L-histidine + ATP = L-histidyl-tRNA(His) + AMP + diphosphate + H(+). This Solibacter usitatus (strain Ellin6076) protein is Histidine--tRNA ligase.